The chain runs to 151 residues: uncharacterized protein (151 aa).

This is an uncharacterized protein from Archaeoglobus fulgidus (strain ATCC 49558 / DSM 4304 / JCM 9628 / NBRC 100126 / VC-16).